Here is a 708-residue protein sequence, read N- to C-terminus: Leukotoxin translocation ATP-binding protein LktB (708 aa).

The region spanning 1–126 is the Peptidase C39 domain; it reads MEANHQRNDL…ACYQGQLILV (126 aa). One can recognise an ABC transmembrane type-1 domain in the interval 155-437; it reads FLETLIVSIF…LAQLWQDFQQ (283 aa). The next 5 helical transmembrane spans lie at 159–179, 192–212, 270–290, 296–316, and 389–409; these read LIVS…FQVV, LNII…LSGL, ALTS…MWYY, LVIL…SPIL, and VMVI…LSIG. The ABC transporter domain maps to 469–704; it reads IAFKNIRFRY…SNGLYSYLHQ (236 aa). 503 to 510 is an ATP binding site; sequence GRSGSGKS.

Belongs to the ABC transporter superfamily. Protein-1 exporter (TC 3.A.1.109) family. In terms of assembly, homodimer.

Its subcellular location is the cell inner membrane. It catalyses the reaction ATP + H2O + proteinSide 1 = ADP + phosphate + proteinSide 2.. Its function is as follows. Part of the ABC transporter complex LktBD involved in leukotoxin export. Transmembrane domains (TMD) form a pore in the inner membrane and the ATP-binding domain (NBD) is responsible for energy generation. This chain is Leukotoxin translocation ATP-binding protein LktB (lktB), found in Mannheimia glucosida.